Consider the following 387-residue polypeptide: DNA double-strand break repair protein Mre11 (387 aa).

4 residues coordinate Mn(2+): Asp9, His11, Asp50, and Asn85. His86 (proton donor) is an active-site residue. Mn(2+) is bound by residues His150, Asp181, and His183. The interval 365–387 (AVLDDDADAADDDGRPTTVEEFQ) is disordered. The span at 366–375 (VLDDDADAAD) shows a compositional bias: acidic residues.

It belongs to the MRE11/RAD32 family. As to quaternary structure, homodimer. Forms a heterotetramer composed of two Mre11 subunits and two Rad50 subunits. Requires Mn(2+) as cofactor.

Nuclease activity is regulated by Rad50. Functionally, part of the Rad50/Mre11 complex, which is involved in the early steps of DNA double-strand break (DSB) repair. Mre11 binds to DSB ends and has both double-stranded 3'-5' exonuclease activity and single-stranded endonuclease activity. This chain is DNA double-strand break repair protein Mre11, found in Halobacterium salinarum (strain ATCC 700922 / JCM 11081 / NRC-1) (Halobacterium halobium).